A 478-amino-acid polypeptide reads, in one-letter code: Melanopsin (478 aa).

Over residues 1–14 (MNPPSGPRVPPSPT) the composition is skewed to pro residues. A disordered region spans residues 1–32 (MNPPSGPRVPPSPTQEPSCMATPAPPSWWDSS). The Extracellular portion of the chain corresponds to 1 to 72 (MNPPSGPRVP…VDVPDHAHYT (72 aa)). Residues 73–93 (LGTVILLVGLTGMLGNLTVIY) form a helical membrane-spanning segment. Residues 94–107 (TFCRSRSLRTPANM) are Cytoplasmic-facing. Residues 108 to 128 (FIINLAVSDFLMSFTQAPVFF) traverse the membrane as a helical segment. At 129–144 (TSSLYKQWLFGETGCE) the chain is on the extracellular side. A disulfide bridge connects residues C143 and C221. The helical transmembrane segment at 145 to 165 (FYAFCGALFGISSMITLTAIA) threads the bilayer. At 166 to 188 (LDRYLVITRPLATFGVASKRRAA) the chain is on the cytoplasmic side. The chain crosses the membrane as a helical span at residues 189–209 (FVLLGVWLYALAWSLPPFFGW). Over 210–238 (SAYVPEGLLTSCSWDYMSFTPAVRAYTML) the chain is Extracellular. Residues 239-259 (LCCFVFFLPLLIIIYCYIFIF) traverse the membrane as a helical segment. Over 260–296 (RAIRETGRALQTFGACKGNGESLWQRQRLQSECKMAK) the chain is Cytoplasmic. A helical membrane pass occupies residues 297–317 (IMLLVILLFVLSWAPYSAVAL). Residues 318–332 (VAFAGYAHVLTPYMS) lie on the Extracellular side of the membrane. A helical transmembrane segment spans residues 333–353 (SVPAVIAKASAIHNPIIYAIT). K340 is subject to N6-(retinylidene)lysine. The Cytoplasmic portion of the chain corresponds to 354–478 (HPKYRVAIAQ…GLIPSQDPRM (125 aa)). The disordered stretch occupies residues 440-478 (LYGQGLEDLEAKAPPRPQGHEAETPGKTKGLIPSQDPRM). Positions 448–465 (LEAKAPPRPQGHEAETPG) are enriched in basic and acidic residues.

This sequence belongs to the G-protein coupled receptor 1 family. Opsin subfamily. As to expression, expressed in the retina.

The protein localises to the cell membrane. It localises to the cell projection. It is found in the axon. The protein resides in the dendrite. Its subcellular location is the perikaryon. Functionally, photoreceptor that binds cis-retinaldehydes. Contributes to pupillar reflex, photoentrainment and other non-image forming responses to light. May be involved in the optokinetic visual tracking response. May be involved in the regulation of retinal hyaloid vessel growth and regression. The polypeptide is Melanopsin (OPN4) (Homo sapiens (Human)).